Reading from the N-terminus, the 373-residue chain is Chaperone protein DnaJ (373 aa).

One can recognise a J domain in the interval 5–70; sequence DYYEVLGVHR…QQRVIYDQYG (66 aa). The CR-type zinc-finger motif lies at 136–214; the sequence is GLETKIQIPR…CHGSGRVRGK (79 aa). Zn(2+) contacts are provided by Cys-149, Cys-152, Cys-166, Cys-169, Cys-188, Cys-191, Cys-202, and Cys-205. 4 CXXCXGXG motif repeats span residues 149 to 156, 166 to 173, 188 to 195, and 202 to 209; these read CGTCDGIG, CPTCQGAG, CPECNGEG, and CEECHGSG.

This sequence belongs to the DnaJ family. As to quaternary structure, homodimer. Requires Zn(2+) as cofactor.

Its subcellular location is the cytoplasm. In terms of biological role, participates actively in the response to hyperosmotic and heat shock by preventing the aggregation of stress-denatured proteins and by disaggregating proteins, also in an autonomous, DnaK-independent fashion. Unfolded proteins bind initially to DnaJ; upon interaction with the DnaJ-bound protein, DnaK hydrolyzes its bound ATP, resulting in the formation of a stable complex. GrpE releases ADP from DnaK; ATP binding to DnaK triggers the release of the substrate protein, thus completing the reaction cycle. Several rounds of ATP-dependent interactions between DnaJ, DnaK and GrpE are required for fully efficient folding. Also involved, together with DnaK and GrpE, in the DNA replication of plasmids through activation of initiation proteins. In Syntrophotalea carbinolica (strain DSM 2380 / NBRC 103641 / GraBd1) (Pelobacter carbinolicus), this protein is Chaperone protein DnaJ.